The sequence spans 409 residues: Nucleoprotein (409 aa).

Disordered stretches follow at residues 1–64 and 167–197; these read MSAG…SNVK and RNSSAVTSRENSRPGSRDSSRGRQRSRVDDD. The RNA-binding stretch occupies residues 30-161; it reads GTGQASWFQS…NNYRWDFIAL (132 aa). The 126-residue stretch at 32–157 folds into the CoV N NTD domain; it reads GQASWFQSLK…GGPDNNYRWD (126 aa). Residues 176-197 show a composition bias toward basic and acidic residues; sequence ENSRPGSRDSSRGRQRSRVDDD. Ser192 is subject to Phosphoserine; by host. One can recognise a CoV N CTD domain in the interval 217–333; that stretch reads SKQKANEMAE…ECVDGVGTRP (117 aa). Positions 228–335 are dimerization; sequence KYHKRAIAPG…VDGVGTRPKD (108 aa). The cysteines at positions 322 and 325 are disulfide-linked. The segment at 327–409 is disordered; it reads DGVGTRPKDD…GEGAFDDINI (83 aa). Residues 332–349 are compositionally biased toward basic and acidic residues; it reads RPKDDPTPRSRAASKDRN. Phosphothreonine; by host is present on Thr374.

This sequence belongs to the gammacoronavirus nucleocapsid protein family. In terms of assembly, homooligomer. Both monomeric and oligomeric forms interact with RNA. Interacts with protein M. Interacts with NSP3; this interaction serves to tether the genome to the newly translated replicase-transcriptase complex at a very early stage of infection. ADP-ribosylated. The ADP-ribosylation is retained in the virion during infection. Post-translationally, phosphorylated on serine and threonine residues.

It is found in the virion. The protein resides in the host endoplasmic reticulum-Golgi intermediate compartment. The protein localises to the host Golgi apparatus. Its function is as follows. Packages the positive strand viral genome RNA into a helical ribonucleocapsid (RNP) and plays a fundamental role during virion assembly through its interactions with the viral genome and membrane protein M. Plays an important role in enhancing the efficiency of subgenomic viral RNA transcription as well as viral replication. This chain is Nucleoprotein, found in Gallus gallus (Chicken).